Here is a 148-residue protein sequence, read N- to C-terminus: Pivalyl-CoA mutase small subunit (148 aa).

Residues P8–E138 form the B12-binding domain. H21 contacts adenosylcob(III)alamin.

It belongs to the acyl-CoA mutase small subunit family. In terms of assembly, monomer in the absence of the PCM large subunit. Weakly interacts with the PCM large subunit; an alpha(2)beta(2) stoichiometry seems to represent the active state of the enzyme. Adenosylcob(III)alamin serves as cofactor.

The catalysed reaction is 3-methylbutanoyl-CoA = 2,2-dimethylpropanoyl-CoA. Functionally, together with Xaut_5043, catalyzes the reversible isomerization between pivalyl-CoA and isovaleryl-CoA, using radical chemistry. Does not exhibit isobutyryl-CoA mutase (ICM) activity. The protein is Pivalyl-CoA mutase small subunit of Xanthobacter autotrophicus (strain ATCC BAA-1158 / Py2).